A 94-amino-acid chain; its full sequence is Co-chaperonin GroES (94 aa).

Belongs to the GroES chaperonin family. As to quaternary structure, heptamer of 7 subunits arranged in a ring. Interacts with the chaperonin GroEL.

The protein resides in the cytoplasm. In terms of biological role, together with the chaperonin GroEL, plays an essential role in assisting protein folding. The GroEL-GroES system forms a nano-cage that allows encapsulation of the non-native substrate proteins and provides a physical environment optimized to promote and accelerate protein folding. GroES binds to the apical surface of the GroEL ring, thereby capping the opening of the GroEL channel. The polypeptide is Co-chaperonin GroES (Pediococcus pentosaceus (strain ATCC 25745 / CCUG 21536 / LMG 10740 / 183-1w)).